A 142-amino-acid chain; its full sequence is Putative transmembrane protein INAFM1 (142 aa).

The segment covering methionine 1–leucine 19 has biased composition (gly residues). The tract at residues methionine 1–glycine 22 is disordered. Residues tyrosine 36–valine 56 traverse the membrane as a helical segment. 2 disordered regions span residues proline 61 to proline 83 and valine 99 to glycine 142. A compositionally biased stretch (pro residues) spans proline 64 to proline 83. Positions valine 99–leucine 111 are enriched in low complexity. Residues tyrosine 117–glycine 142 show a composition bias toward basic and acidic residues.

It localises to the membrane. This chain is Putative transmembrane protein INAFM1, found in Homo sapiens (Human).